A 400-amino-acid polypeptide reads, in one-letter code: 11-beta-hydroxysteroid dehydrogenase type 2 (400 aa).

82–111 (TRAVLITGCDTGFGKETAKKLDAMGFTVLA) serves as a coordination point for NAD(+). S219 lines the substrate pocket. Y232 (proton acceptor) is an active-site residue. Positions 378–400 (PGQPGPVHDTTQDPNPSPTVSAL) are disordered. The span at 389–400 (QDPNPSPTVSAL) shows a compositional bias: polar residues.

The protein belongs to the short-chain dehydrogenases/reductases (SDR) family. As to quaternary structure, interacts with ligand-free cytoplasmic NR3C2. Highly expressed in kidney, adrenal gland and distal colon, and at much lower levels in lung, hypothalamus, hippocampus, and midbrain.

It localises to the microsome. The protein resides in the endoplasmic reticulum. The catalysed reaction is an 11beta-hydroxysteroid + NAD(+) = an 11-oxosteroid + NADH + H(+). It carries out the reaction corticosterone + NAD(+) = 11-dehydrocorticosterone + NADH + H(+). It catalyses the reaction 11beta,17beta-dihydroxyandrost-4-ene-3-one + NAD(+) = 17beta-hydroxyandrost-4-ene-3,11-dione + NADH + H(+). The enzyme catalyses 11beta-hydroxyandrost-4-ene-3,17-dione + NAD(+) = androst-4-ene-3,11,17-trione + NADH + H(+). The protein operates within steroid metabolism. With respect to regulation, inhibited by glycyrrhetinic acid. Induced by progesterone, through the Ihh signaling pathway. Catalyzes the conversion of biologically active 11beta-hydroxyglucocorticoids (11beta-hydroxysteroid) such as corticosterone, to inactive 11-ketoglucocorticoids (11-oxosteroid) such as 11-dehydrocorticosterone, in the presence of NAD(+). Functions as a dehydrogenase (oxidase), thereby decreasing the concentration of active glucocorticoids, thus protecting the nonselective mineralocorticoid receptor from occupation by glucocorticoids. Plays an important role in maintaining glucocorticoids balance during preimplantation and protects the fetus from excessive maternal corticosterone exposure. Catalyzes the oxidation of 11beta-hydroxytestosterone (11beta,17beta-dihydroxyandrost-4-ene-3-one) to 11-ketotestosterone (17beta-hydroxyandrost-4-ene-3,11-dione), a major bioactive androgen. Catalyzes the conversion of 11beta-hydroxyandrostenedione (11beta-hydroxyandrost-4-ene-3,17-dione) to 11-ketoandrostenedione (androst-4-ene-3,11,17-trione), which can be further metabolized to 11-ketotestosterone. Converts 7-beta-25-dihydroxycholesterol to 7-oxo-25-hydroxycholesterol in vitro. 7-beta-25-dihydroxycholesterol (not 7-oxo-25-hydroxycholesterol) acts as a ligand for the G-protein-coupled receptor (GPCR) Epstein-Barr virus-induced gene 2 (EBI2) and may thereby regulate immune cell migration. This Rattus norvegicus (Rat) protein is 11-beta-hydroxysteroid dehydrogenase type 2 (Hsd11b2).